Reading from the N-terminus, the 285-residue chain is Transcription factor MYB15 (285 aa).

2 HTH myb-type domains span residues 9–61 (KMGL…MNYL) and 62–116 (KPDI…KKRL). 2 consecutive DNA-binding regions (H-T-H motif) follow at residues 37-61 (WRAL…MNYL) and 89-112 (WSAI…HTHL). The tract at residues 115 to 172 (RLEDYQPAKPKTSNKKKGTKPKSESVITSSNSTRSESELADSSNPSGESLFSTSPSTS) is disordered. Residues 139–158 (SVITSSNSTRSESELADSSN) are compositionally biased toward polar residues. Positions 159 to 172 (PSGESLFSTSPSTS) are enriched in low complexity.

Interacts with SCRM/ICE1. In terms of tissue distribution, expressed in roots, leaves, stems and flowers. Expressed in stomatal guard cells.

The protein localises to the nucleus. Functionally, transcription factor involved in cold-regulation of CBF genes and in the development of freezing tolerance. May be part of a complex network of transcription factors controlling the expression of CBF genes and other genes in response to cold stress. Binds to the MYB recognition sequences in the promoters of CBF1, CBF2 and CBF3 genes. Involved in drought and salt tolerance. May enhance expression levels of genes involved in abscisic acid (ABA) biosynthesis and signaling, as well as those encoding stress-protective proteins. This Arabidopsis thaliana (Mouse-ear cress) protein is Transcription factor MYB15.